The primary structure comprises 1247 residues: Nitric oxide synthase (1247 aa).

Residues 13-33 (EVAEGRESSKANHIGEERRGY) form a disordered region. Residue Ser146 coordinates (6R)-L-erythro-5,6,7,8-tetrahydrobiopterin. Cys224 serves as a coordination point for heme b. L-arginine is bound by residues Gln287, Trp396, Tyr397, Glu401, and Asn406. Positions 487 and 500 each coordinate (6R)-L-erythro-5,6,7,8-tetrahydrobiopterin. Tyr515 contributes to the heme b binding site. The segment at 537-557 (PRRKFNFKQIARAVKFTSKLF) is calmodulin-binding. In terms of domain architecture, Flavodoxin-like spans 567-766 (ATVLYATETG…AFRKWAPEVF (200 aa)). 712 to 743 (VFALGSSAYPNFCAFGKYIDNILGELGGERLM) serves as a coordination point for FMN. In terms of domain architecture, FAD-binding FR-type spans 795–1065 (NTVRYAPVAE…VRSAPSFHMS (271 aa)). Residues 855–866 (YEPGDHVGIFPA) and 998–1008 (LQPRFYSISSS) contribute to the FAD site. Residues 1073-1091 (ILIG…WQEW) and 1170-1185 (KGHI…AEHV) contribute to the NADP(+) site.

It belongs to the NOS family. Heme b serves as cofactor. FAD is required as a cofactor. It depends on FMN as a cofactor.

The catalysed reaction is 2 L-arginine + 3 NADPH + 4 O2 + H(+) = 2 L-citrulline + 2 nitric oxide + 3 NADP(+) + 4 H2O. Its activity is regulated as follows. Stimulated by calcium/calmodulin. Its function is as follows. Produces nitric oxide (NO) which is a messenger molecule with diverse functions throughout the body. Nitric oxide limits plasmodium development in the midgut. This chain is Nitric oxide synthase, found in Anopheles stephensi (Indo-Pakistan malaria mosquito).